The primary structure comprises 437 residues: Selenocysteine lyase (437 aa).

Residue Met1 is modified to N-acetylmethionine. Residues 1-30 are disordered; sequence MEAAGARNRDARSRAEKSPPESRKVYMDYN. Positions 7 to 26 are enriched in basic and acidic residues; the sequence is RNRDARSRAEKSPPESRKVY. N6-(pyridoxal phosphate)lysine is present on Lys252. Cys380 functions as the S-selanylcysteine intermediate in the catalytic mechanism.

The protein belongs to the class-V pyridoxal-phosphate-dependent aminotransferase family. In terms of assembly, homodimer. It depends on pyridoxal 5'-phosphate as a cofactor.

The protein localises to the cytoplasm. The protein resides in the cytosol. The catalysed reaction is L-selenocysteine + AH2 = hydrogenselenide + L-alanine + A + H(+). Its function is as follows. Catalyzes the decomposition of L-selenocysteine to L-alanine and elemental selenium. This chain is Selenocysteine lyase (SCLY), found in Bos taurus (Bovine).